Consider the following 1322-residue polypeptide: Serine/threonine-protein phosphatase UIS2 (1322 aa).

The first 22 residues, 1 to 22, serve as a signal peptide directing secretion; that stretch reads MNISKFFLIFIPLVLFKYPANN. An interaction with phosphorylated eIF2alpha region spans residues 1–535; that stretch reads MNISKFFLIF…NELKSTSNAM (535 aa). 2 stretches are compositionally biased toward basic and acidic residues: residues 267-279 and 288-326; these read EKSAEKYEDKELN and NSKKEQTGNDNVSETKMHKEESSDSSNKTDESNVCKSEN. 4 disordered regions span residues 267–326, 613–646, 1066–1087, and 1170–1196; these read EKSA…KSEN, NTNTDDKNQHNDISTTPINNYTDGNEGNNNSENN, NETPHNSNEILNTNENESIQPN, and EVPDESKEDDNTNSQPEDTIDQENKDD. A compositionally biased stretch (low complexity) spans 631–646; that stretch reads NNYTDGNEGNNNSENN.

Mn(2+) serves as cofactor.

The enzyme catalyses O-phospho-L-seryl-[protein] + H2O = L-seryl-[protein] + phosphate. Protein phosphatase which dephosphorylates 'Ser-59' of translation factor eIF2alpha during the liver stage, thus enabling protein translation. This Plasmodium berghei (strain Anka) protein is Serine/threonine-protein phosphatase UIS2.